The following is a 79-amino-acid chain: Succinate dehydrogenase assembly factor 1, mitochondrial (79 aa).

This sequence belongs to the complex I LYR family. SDHAF1 subfamily. In terms of assembly, interacts with SDH2 within an SDH1-SDH2 subcomplex.

The protein resides in the mitochondrion matrix. Its function is as follows. Plays an essential role in the assembly of succinate dehydrogenase (SDH), an enzyme complex (also referred to as respiratory complex II) that is a component of both the tricarboxylic acid (TCA) cycle and the mitochondrial electron transport chain, and which couples the oxidation of succinate to fumarate with the reduction of ubiquinone (coenzyme Q) to ubiquinol. Promotes maturation of the iron-sulfur protein subunit SDH2 of the SDH catalytic dimer, protecting it from the deleterious effects of oxidants. Acts together with SDHAF3 (SDH7). In Saccharomyces cerevisiae (strain YJM789) (Baker's yeast), this protein is Succinate dehydrogenase assembly factor 1, mitochondrial.